The following is a 315-amino-acid chain: Holliday junction branch migration complex subunit RuvB (315 aa).

Residues 1–168 (MAKKQEIRPK…FGLIGQISNY (168 aa)) form a large ATPase domain (RuvB-L) region. ATP contacts are provided by residues isoleucine 7, arginine 8, glycine 49, lysine 52, threonine 53, serine 54, 115–117 (EDF), arginine 158, tyrosine 168, and arginine 205. Threonine 53 is a Mg(2+) binding site. A small ATPAse domain (RuvB-S) region spans residues 169-239 (QVEDIEKIIK…LVNKTLKQLG (71 aa)). A head domain (RuvB-H) region spans residues 242-315 (ENGLNESQVK…QKGISYLERI (74 aa)). Residues lysine 297 and arginine 302 each coordinate DNA.

The protein belongs to the RuvB family. As to quaternary structure, homohexamer. Forms an RuvA(8)-RuvB(12)-Holliday junction (HJ) complex. HJ DNA is sandwiched between 2 RuvA tetramers; dsDNA enters through RuvA and exits via RuvB. An RuvB hexamer assembles on each DNA strand where it exits the tetramer. Each RuvB hexamer is contacted by two RuvA subunits (via domain III) on 2 adjacent RuvB subunits; this complex drives branch migration. In the full resolvosome a probable DNA-RuvA(4)-RuvB(12)-RuvC(2) complex forms which resolves the HJ.

It is found in the cytoplasm. The catalysed reaction is ATP + H2O = ADP + phosphate + H(+). Functionally, the RuvA-RuvB-RuvC complex processes Holliday junction (HJ) DNA during genetic recombination and DNA repair, while the RuvA-RuvB complex plays an important role in the rescue of blocked DNA replication forks via replication fork reversal (RFR). RuvA specifically binds to HJ cruciform DNA, conferring on it an open structure. The RuvB hexamer acts as an ATP-dependent pump, pulling dsDNA into and through the RuvAB complex. RuvB forms 2 homohexamers on either side of HJ DNA bound by 1 or 2 RuvA tetramers; 4 subunits per hexamer contact DNA at a time. Coordinated motions by a converter formed by DNA-disengaged RuvB subunits stimulates ATP hydrolysis and nucleotide exchange. Immobilization of the converter enables RuvB to convert the ATP-contained energy into a lever motion, pulling 2 nucleotides of DNA out of the RuvA tetramer per ATP hydrolyzed, thus driving DNA branch migration. The RuvB motors rotate together with the DNA substrate, which together with the progressing nucleotide cycle form the mechanistic basis for DNA recombination by continuous HJ branch migration. Branch migration allows RuvC to scan DNA until it finds its consensus sequence, where it cleaves and resolves cruciform DNA. This Mycoplasmopsis pulmonis (strain UAB CTIP) (Mycoplasma pulmonis) protein is Holliday junction branch migration complex subunit RuvB.